A 255-amino-acid polypeptide reads, in one-letter code: Thiazole synthase (255 aa).

Lysine 96 serves as the catalytic Schiff-base intermediate with DXP. Residues glycine 157, 183 to 184 (AG), and 205 to 206 (NT) contribute to the 1-deoxy-D-xylulose 5-phosphate site.

It belongs to the ThiG family. Homotetramer. Forms heterodimers with either ThiH or ThiS.

It localises to the cytoplasm. The catalysed reaction is [ThiS sulfur-carrier protein]-C-terminal-Gly-aminoethanethioate + 2-iminoacetate + 1-deoxy-D-xylulose 5-phosphate = [ThiS sulfur-carrier protein]-C-terminal Gly-Gly + 2-[(2R,5Z)-2-carboxy-4-methylthiazol-5(2H)-ylidene]ethyl phosphate + 2 H2O + H(+). It functions in the pathway cofactor biosynthesis; thiamine diphosphate biosynthesis. Catalyzes the rearrangement of 1-deoxy-D-xylulose 5-phosphate (DXP) to produce the thiazole phosphate moiety of thiamine. Sulfur is provided by the thiocarboxylate moiety of the carrier protein ThiS. In vitro, sulfur can be provided by H(2)S. The sequence is that of Thiazole synthase from Bacillus pumilus (strain SAFR-032).